The following is a 308-amino-acid chain: D-alanine--D-alanine ligase (308 aa).

Positions 102–302 constitute an ATP-grasp domain; it reads KTVAKSAGIP…FGALLSWMVE (201 aa). ATP is bound at residue 128-183; it reads PMEPPYVVKPVAEGSSFGVVIVREGQSHPPQVLGSAEWGYGERVMVERYIPGRELT. Mg(2+)-binding residues include aspartate 252, glutamate 269, and asparagine 271.

It belongs to the D-alanine--D-alanine ligase family. The cofactor is Mg(2+). Mn(2+) is required as a cofactor.

The protein resides in the cytoplasm. It catalyses the reaction 2 D-alanine + ATP = D-alanyl-D-alanine + ADP + phosphate + H(+). It participates in cell wall biogenesis; peptidoglycan biosynthesis. Cell wall formation. The protein is D-alanine--D-alanine ligase of Chelativorans sp. (strain BNC1).